Here is a 194-residue protein sequence, read N- to C-terminus: Ion-translocating oxidoreductase complex subunit B (194 aa).

The interval 1-26 (MSGVLIAVAALLALAAVFGAVLGFAS) is hydrophobic. The 59-residue stretch at 32-90 (EGDPIVDQIDSLLPQTQCGQCGHPGCRPYAEAIAEGEEHNRCPPGGQDTVVALSELLGR) folds into the 4Fe-4S domain. Cysteine 49, cysteine 52, cysteine 57, cysteine 73, cysteine 116, cysteine 119, cysteine 122, cysteine 126, cysteine 146, cysteine 149, cysteine 152, and cysteine 156 together coordinate [4Fe-4S] cluster. 4Fe-4S ferredoxin-type domains follow at residues 107–136 (KVAY…GAAK) and 137–166 (LMHT…MLEV).

It belongs to the 4Fe4S bacterial-type ferredoxin family. RnfB subfamily. In terms of assembly, the complex is composed of six subunits: RnfA, RnfB, RnfC, RnfD, RnfE and RnfG. [4Fe-4S] cluster serves as cofactor.

The protein localises to the cell inner membrane. Part of a membrane-bound complex that couples electron transfer with translocation of ions across the membrane. The chain is Ion-translocating oxidoreductase complex subunit B from Alcanivorax borkumensis (strain ATCC 700651 / DSM 11573 / NCIMB 13689 / SK2).